Reading from the N-terminus, the 123-residue chain is Protein HesB, vegetative (123 aa).

This sequence belongs to the HesB/IscA family.

May be required for efficient nitrogen fixation. The protein is Protein HesB, vegetative (hesB2) of Trichormus variabilis (strain ATCC 29413 / PCC 7937) (Anabaena variabilis).